A 327-amino-acid chain; its full sequence is Flotillin-like protein FloA (327 aa).

The next 2 membrane-spanning stretches (helical) occupy residues 8–28 and 29–49; these read VLLI…LVPI and PLWI…LVGM.

It belongs to the flotillin-like FloA family. As to quaternary structure, homooligomerizes.

Its subcellular location is the cell membrane. The protein resides in the membrane raft. Found in functional membrane microdomains (FMM) that may be equivalent to eukaryotic membrane rafts. FMMs are highly dynamic and increase in number as cells age. Flotillins are thought to be important factors in membrane fluidity. In Exiguobacterium sibiricum (strain DSM 17290 / CCUG 55495 / CIP 109462 / JCM 13490 / 255-15), this protein is Flotillin-like protein FloA.